We begin with the raw amino-acid sequence, 173 residues long: Lipoprotein signal peptidase (173 aa).

3 helical membrane-spanning segments follow: residues 9 to 29 (LPFL…ILVV), 37 to 57 (VIPV…GAAF), and 70 to 90 (ILLV…YLKS). Residues Asp-124 and Asp-146 contribute to the active site. Residues 142–162 (FNAADSFIVCCGIGLGVNLIL) traverse the membrane as a helical segment.

This sequence belongs to the peptidase A8 family.

The protein resides in the cell inner membrane. It carries out the reaction Release of signal peptides from bacterial membrane prolipoproteins. Hydrolyzes -Xaa-Yaa-Zaa-|-(S,diacylglyceryl)Cys-, in which Xaa is hydrophobic (preferably Leu), and Yaa (Ala or Ser) and Zaa (Gly or Ala) have small, neutral side chains.. Its pathway is protein modification; lipoprotein biosynthesis (signal peptide cleavage). Its function is as follows. This protein specifically catalyzes the removal of signal peptides from prolipoproteins. The sequence is that of Lipoprotein signal peptidase from Treponema denticola (strain ATCC 35405 / DSM 14222 / CIP 103919 / JCM 8153 / KCTC 15104).